A 292-amino-acid chain; its full sequence is Protoheme IX farnesyltransferase (292 aa).

Helical transmembrane passes span 13-33 (ILFG…QGSI), 35-55 (ILLL…GCVV), 84-104 (VALV…WFGV), 106-126 (GYAF…YSLW), 135-155 (TVIG…AVTH), 161-181 (ALLL…AIAI), 206-226 (IECV…YCFG), 231-251 (FFLI…IIGF), and 263-283 (FFLY…FTYQ).

It belongs to the UbiA prenyltransferase family. Protoheme IX farnesyltransferase subfamily.

Its subcellular location is the cell inner membrane. It catalyses the reaction heme b + (2E,6E)-farnesyl diphosphate + H2O = Fe(II)-heme o + diphosphate. Its pathway is porphyrin-containing compound metabolism; heme O biosynthesis; heme O from protoheme: step 1/1. Its function is as follows. Converts heme B (protoheme IX) to heme O by substitution of the vinyl group on carbon 2 of heme B porphyrin ring with a hydroxyethyl farnesyl side group. The chain is Protoheme IX farnesyltransferase from Acinetobacter baumannii (strain AB307-0294).